Here is a 476-residue protein sequence, read N- to C-terminus: Methylenetetrahydrofolate--tRNA-(uracil-5-)-methyltransferase TrmFO (476 aa).

Residue 14–19 (GGGLAG) coordinates FAD.

The protein belongs to the MnmG family. TrmFO subfamily. FAD serves as cofactor.

It is found in the cytoplasm. It carries out the reaction uridine(54) in tRNA + (6R)-5,10-methylene-5,6,7,8-tetrahydrofolate + NADH + H(+) = 5-methyluridine(54) in tRNA + (6S)-5,6,7,8-tetrahydrofolate + NAD(+). The catalysed reaction is uridine(54) in tRNA + (6R)-5,10-methylene-5,6,7,8-tetrahydrofolate + NADPH + H(+) = 5-methyluridine(54) in tRNA + (6S)-5,6,7,8-tetrahydrofolate + NADP(+). Catalyzes the folate-dependent formation of 5-methyl-uridine at position 54 (M-5-U54) in all tRNAs. The chain is Methylenetetrahydrofolate--tRNA-(uracil-5-)-methyltransferase TrmFO from Brucella anthropi (strain ATCC 49188 / DSM 6882 / CCUG 24695 / JCM 21032 / LMG 3331 / NBRC 15819 / NCTC 12168 / Alc 37) (Ochrobactrum anthropi).